A 250-amino-acid chain; its full sequence is 2,3-bisphosphoglycerate-dependent phosphoglycerate mutase (250 aa).

(2R)-2,3-bisphosphoglycerate contacts are provided by arginine 10, histidine 11, asparagine 17, glycine 24, arginine 62, glutamate 89, tyrosine 92, lysine 100, arginine 116, arginine 117, histidine 184, glycine 185, and asparagine 186. Residue histidine 11 is the Tele-phosphohistidine intermediate of the active site. Residue glycine 24 coordinates (2R)-3-phosphoglycerate. The (2R)-3-phosphoglycerate site is built by glutamate 89, tyrosine 92, lysine 100, arginine 116, and arginine 117. Glutamate 89 (proton donor/acceptor) is an active-site residue. Residue asparagine 186 participates in (2R)-3-phosphoglycerate binding.

Belongs to the phosphoglycerate mutase family. BPG-dependent PGAM subfamily. Ubiquitously expressed with the highest expression in the sub-tegumental muscle layer (at protein level). Expressed in the tegument (at protein level).

Its subcellular location is the tegument. The catalysed reaction is (2R)-2-phosphoglycerate = (2R)-3-phosphoglycerate. It participates in carbohydrate degradation; glycolysis; pyruvate from D-glyceraldehyde 3-phosphate: step 3/5. Strongly activated by 2,3-bisphosphoglycerate (2,3-BPG). Inhibited by vanadate in a dose-dependent manner. In terms of biological role, catalyzes interconversion of 3- and 2-phosphoglycerate with 2,3-bisphosphoglycerate (2,3-BPG) as the primer of the reaction. Schistosomula have significant surface phosphoglycerate mutase activity also without 2,3-BPG. Binds human plasminogen and enhances its conversion to active thrombolytic plasmin in the presence of human tissue plasminogen activator (tPA) in vitro. Host-interactive surface protein, which may degrade vascular blood clots surrounding the worm in vivo and thus may help survival of the parasite in its host microenvironment. The polypeptide is 2,3-bisphosphoglycerate-dependent phosphoglycerate mutase (Schistosoma mansoni (Blood fluke)).